The chain runs to 166 residues: Large ribosomal subunit protein uL10 (166 aa).

It belongs to the universal ribosomal protein uL10 family. In terms of assembly, part of the ribosomal stalk of the 50S ribosomal subunit. The N-terminus interacts with L11 and the large rRNA to form the base of the stalk. The C-terminus forms an elongated spine to which L12 dimers bind in a sequential fashion forming a multimeric L10(L12)X complex.

In terms of biological role, forms part of the ribosomal stalk, playing a central role in the interaction of the ribosome with GTP-bound translation factors. This Alkaliphilus metalliredigens (strain QYMF) protein is Large ribosomal subunit protein uL10.